A 62-amino-acid polypeptide reads, in one-letter code: Ferredoxin-3 (62 aa).

4Fe-4S ferredoxin-type domains follow at residues 2–28 (SLKI…SAGS) and 29–62 (DIYV…IVKA). Positions 9, 12, 15, 19, 38, 41, 50, and 54 each coordinate [4Fe-4S] cluster.

[4Fe-4S] cluster is required as a cofactor.

In terms of biological role, ferredoxins are iron-sulfur proteins that transfer electrons in a wide variety of metabolic reactions. This chain is Ferredoxin-3, found in Chlorobaculum tepidum (strain ATCC 49652 / DSM 12025 / NBRC 103806 / TLS) (Chlorobium tepidum).